The sequence spans 545 residues: Cytochrome P450 10 (545 aa).

Residue cysteine 493 participates in heme binding.

Belongs to the cytochrome P450 family. It depends on heme as a cofactor. In terms of tissue distribution, abundantly expressed in the female gonadotropic hormone producing dorsal bodies.

May be involved in the synthesis of the female gonadotropic hormone produced by the dorsal bodies. The sequence is that of Cytochrome P450 10 (CYP10) from Lymnaea stagnalis (Great pond snail).